The primary structure comprises 211 residues: Ribosome maturation factor RimM (211 aa).

Residues 111–182 enclose the PRC barrel domain; that stretch reads PDAWYDHQLV…TLVITPPLGL (72 aa). Positions 184 to 211 are disordered; that stretch reads EEIPDEQPTPSATSDAEPGSAPEGDDAR.

This sequence belongs to the RimM family. In terms of assembly, binds ribosomal protein uS19.

Its subcellular location is the cytoplasm. Its function is as follows. An accessory protein needed during the final step in the assembly of 30S ribosomal subunit, possibly for assembly of the head region. Essential for efficient processing of 16S rRNA. May be needed both before and after RbfA during the maturation of 16S rRNA. It has affinity for free ribosomal 30S subunits but not for 70S ribosomes. The chain is Ribosome maturation factor RimM from Clavibacter sepedonicus (Clavibacter michiganensis subsp. sepedonicus).